The primary structure comprises 372 residues: Alanine racemase (372 aa).

Lys33 acts as the Proton acceptor; specific for D-alanine in catalysis. Lys33 is modified (N6-(pyridoxal phosphate)lysine). Arg131 lines the substrate pocket. The Proton acceptor; specific for L-alanine role is filled by Tyr261. Met309 is a substrate binding site.

The protein belongs to the alanine racemase family. Pyridoxal 5'-phosphate is required as a cofactor.

It catalyses the reaction L-alanine = D-alanine. It participates in amino-acid biosynthesis; D-alanine biosynthesis; D-alanine from L-alanine: step 1/1. Its function is as follows. Catalyzes the interconversion of L-alanine and D-alanine. May also act on other amino acids. This is Alanine racemase (alr) from Salinispora tropica (strain ATCC BAA-916 / DSM 44818 / JCM 13857 / NBRC 105044 / CNB-440).